Here is a 293-residue protein sequence, read N- to C-terminus: Bifunctional protein FolD (293 aa).

Residues 169 to 171 (GRG), Thr196, and Val237 contribute to the NADP(+) site.

It belongs to the tetrahydrofolate dehydrogenase/cyclohydrolase family. In terms of assembly, homodimer.

It catalyses the reaction (6R)-5,10-methylene-5,6,7,8-tetrahydrofolate + NADP(+) = (6R)-5,10-methenyltetrahydrofolate + NADPH. The catalysed reaction is (6R)-5,10-methenyltetrahydrofolate + H2O = (6R)-10-formyltetrahydrofolate + H(+). It participates in one-carbon metabolism; tetrahydrofolate interconversion. In terms of biological role, catalyzes the oxidation of 5,10-methylenetetrahydrofolate to 5,10-methenyltetrahydrofolate and then the hydrolysis of 5,10-methenyltetrahydrofolate to 10-formyltetrahydrofolate. This is Bifunctional protein FolD from Leifsonia xyli subsp. xyli (strain CTCB07).